Consider the following 219-residue polypeptide: Transcriptional regulatory protein QseB (219 aa).

The Response regulatory domain occupies 2–116 (RILLIEDDML…EVAARLEALM (115 aa)). A 4-aspartylphosphate modification is found at aspartate 51. The segment at residues 124–218 (SNELRHGNVM…VHGIGYTLGE (95 aa)) is a DNA-binding region (ompR/PhoB-type).

In terms of processing, phosphorylated by QseC.

It is found in the cytoplasm. In terms of biological role, member of a two-component regulatory system QseB/QseC. Activates the flagella regulon by activating transcription of FlhDC. Currently it is not known whether this effect is direct or not. The protein is Transcriptional regulatory protein QseB (qseB) of Escherichia coli O157:H7.